We begin with the raw amino-acid sequence, 298 residues long: Nucleotide-binding protein Dred_3054 (298 aa).

Position 20-27 (20-27 (GMSGAGKT)) interacts with ATP. Position 71–74 (71–74 (DIRG)) interacts with GTP.

This sequence belongs to the RapZ-like family.

Functionally, displays ATPase and GTPase activities. The protein is Nucleotide-binding protein Dred_3054 of Desulforamulus reducens (strain ATCC BAA-1160 / DSM 100696 / MI-1) (Desulfotomaculum reducens).